The following is a 483-amino-acid chain: MLTLDTLNVMLAVGEEGLIEEVVLTLLASPQLAAFFEKFPRIKKAVTDDLPRWRDSLRRRLKETEVPPELTEEVECYQQCQRLSTPQFMVQLPQILTLLDKVHSPYAAQARKLVTDNATFTPALHTLFLQRWRLSLVVQTTSLNQQLLEEEREQLLSEVQERMTLTGQLEQVLVENENSAGRLWDMSAGQIKRGDYQLIVKYGDFLAQQPELMQLAEQLGRSREAKSVPKKDAPMETFRTLVREPATVPEQVDGLQQSDDILRLLPTELATLGITELEYEFYRRLVEKQLLTYRLQGESWHEKISQRPVVHQDFDEQPRGPFIVCVDTSGSMGGFNEQCAKAFCLALMRVALADRRRCFIMLFSSEVVGYELTAEQGIEQAIRFLSQRFRGGTDIASCFRSIIERMQGGDWYDADAVVISDFIAQRLPDDVVAKVKSLQRDQQHRFHAVAMSAHGKPGIMRIFDHIWRFDTGLRSRLIRRWKR.

Belongs to the ViaA family. As to quaternary structure, homodimer. Interacts with RavA.

It localises to the cytoplasm. In terms of biological role, component of the RavA-ViaA chaperone complex, which may act on the membrane to optimize the function of some of the respiratory chains. ViaA stimulates the ATPase activity of RavA. This Enterobacter sp. (strain 638) protein is Regulatory protein ViaA.